Here is a 434-residue protein sequence, read N- to C-terminus: UDP-N-acetylglucosamine 1-carboxyvinyltransferase 1 (434 aa).

22 to 23 (KN) is a phosphoenolpyruvate binding site. Position 93 (R93) interacts with UDP-N-acetyl-alpha-D-glucosamine. C117 functions as the Proton donor in the catalytic mechanism. C117 is modified (2-(S-cysteinyl)pyruvic acid O-phosphothioketal). UDP-N-acetyl-alpha-D-glucosamine-binding positions include 122 to 126 (RPIDQ), D306, and V328.

The protein belongs to the EPSP synthase family. MurA subfamily.

It localises to the cytoplasm. It catalyses the reaction phosphoenolpyruvate + UDP-N-acetyl-alpha-D-glucosamine = UDP-N-acetyl-3-O-(1-carboxyvinyl)-alpha-D-glucosamine + phosphate. It functions in the pathway cell wall biogenesis; peptidoglycan biosynthesis. In terms of biological role, cell wall formation. Adds enolpyruvyl to UDP-N-acetylglucosamine. The sequence is that of UDP-N-acetylglucosamine 1-carboxyvinyltransferase 1 from Bacillus cereus (strain ATCC 14579 / DSM 31 / CCUG 7414 / JCM 2152 / NBRC 15305 / NCIMB 9373 / NCTC 2599 / NRRL B-3711).